Reading from the N-terminus, the 146-residue chain is D-aminoacyl-tRNA deacylase (146 aa).

A Gly-cisPro motif, important for rejection of L-amino acids motif is present at residues 137–138 (GP).

It belongs to the DTD family. As to quaternary structure, homodimer.

It is found in the cytoplasm. It carries out the reaction glycyl-tRNA(Ala) + H2O = tRNA(Ala) + glycine + H(+). The catalysed reaction is a D-aminoacyl-tRNA + H2O = a tRNA + a D-alpha-amino acid + H(+). An aminoacyl-tRNA editing enzyme that deacylates mischarged D-aminoacyl-tRNAs. Also deacylates mischarged glycyl-tRNA(Ala), protecting cells against glycine mischarging by AlaRS. Acts via tRNA-based rather than protein-based catalysis; rejects L-amino acids rather than detecting D-amino acids in the active site. By recycling D-aminoacyl-tRNA to D-amino acids and free tRNA molecules, this enzyme counteracts the toxicity associated with the formation of D-aminoacyl-tRNA entities in vivo and helps enforce protein L-homochirality. This Deinococcus deserti (strain DSM 17065 / CIP 109153 / LMG 22923 / VCD115) protein is D-aminoacyl-tRNA deacylase.